The following is a 497-amino-acid chain: Xylooligosaccharide oxidase (497 aa).

An N-terminal signal peptide occupies residues 1–16; the sequence is MHLLPLTVSATAVVSA. Cys30 and Cys79 are oxidised to a cystine. N-linked (GlcNAc...) asparagine glycosylation is found at Asn42 and Asn117. Residues 57–230 form the FAD-binding PCMH-type domain; sequence LPYTPAAIAK…ASFRFKTFAA (174 aa). The 6-(S-cysteinyl)-8alpha-(pros-histidyl)-FAD (His-Cys) cross-link spans 94–155; that stretch reads HSYASFGLGG…GKRAFSHGTC (62 aa). Thr154 is a substrate binding site. Residues Asn192, Asn233, and Asn245 are each glycosylated (N-linked (GlcNAc...) asparagine). Arg272 contributes to the substrate binding site. N-linked (GlcNAc...) asparagine glycans are attached at residues Asn289 and Asn307. Positions 412 and 451 each coordinate substrate.

This sequence belongs to the oxygen-dependent FAD-linked oxidoreductase family. FAD serves as cofactor. In terms of processing, the FAD cofactor is bound via a bicovalent 6-S-cysteinyl, 8alpha-N1-histidyl FAD linkage.

It is found in the secreted. The enzyme catalyses D-xylobiose + O2 = D-xylobiono-1,5-lactone + H2O2. The catalysed reaction is D-xylotriose + O2 = D-xylotriono-1,5-lactone + H2O2. It catalyses the reaction D-xylotetraose + O2 = D-xylotetraono-1,5-lactone + H2O2. In terms of biological role, catalyzes the selective oxidation of C1 hydroxyl moieties on mono-, oligo- and polysaccharides with concomitant reduction of molecular oxygen to hydrogen peroxide. This results in the formation of the corresponding lactones, which typically undergo spontaneous hydrolysis. Xylooligosaccharide oxidase is able to oxidize a variety of substrates including D-xylose, D-cellobiose, lactose and arabinose. The enzyme acts primarily on xylooligosaccharides, indicating that it prefers pentose-based oligosaccharides over hexose-based oligosaccharides. In Thermothelomyces thermophilus (strain ATCC 42464 / BCRC 31852 / DSM 1799) (Sporotrichum thermophile), this protein is Xylooligosaccharide oxidase.